Here is a 104-residue protein sequence, read N- to C-terminus: Large ribosomal subunit protein uL24 (104 aa).

Belongs to the universal ribosomal protein uL24 family. In terms of assembly, part of the 50S ribosomal subunit.

Its function is as follows. One of two assembly initiator proteins, it binds directly to the 5'-end of the 23S rRNA, where it nucleates assembly of the 50S subunit. Functionally, one of the proteins that surrounds the polypeptide exit tunnel on the outside of the subunit. The polypeptide is Large ribosomal subunit protein uL24 (Shewanella sediminis (strain HAW-EB3)).